The sequence spans 166 residues: Large ribosomal subunit protein uL10 (166 aa).

It belongs to the universal ribosomal protein uL10 family. Part of the ribosomal stalk of the 50S ribosomal subunit. The N-terminus interacts with L11 and the large rRNA to form the base of the stalk. The C-terminus forms an elongated spine to which L12 dimers bind in a sequential fashion forming a multimeric L10(L12)X complex.

Its function is as follows. Forms part of the ribosomal stalk, playing a central role in the interaction of the ribosome with GTP-bound translation factors. The chain is Large ribosomal subunit protein uL10 from Mesoplasma florum (strain ATCC 33453 / NBRC 100688 / NCTC 11704 / L1) (Acholeplasma florum).